The chain runs to 341 residues: NADH-quinone oxidoreductase subunit H 1 (341 aa).

8 consecutive transmembrane segments (helical) span residues 13–33 (LVVIGQSVLLLVILLIAIAYI), 82–102 (GLFLLAPLVTCVLALAAWAVI), 115–135 (VGVLYILAVSSLSVYGIIMAG), 161–181 (IGFVVICVLLCVGSLNLTAIV), 190–210 (MLGWYWLPLFPMFVVFYVSAL), 248–268 (YVAIVTMCAMGTILFLGGWLP), 277–297 (WVPGIVWFSLKLLFMFFLFAM), and 313–333 (LGWKVFLPLSLAMVVIVASVL).

Belongs to the complex I subunit 1 family. As to quaternary structure, NDH-1 is composed of 14 different subunits. Subunits NuoA, H, J, K, L, M, N constitute the membrane sector of the complex.

Its subcellular location is the cell inner membrane. It carries out the reaction a quinone + NADH + 5 H(+)(in) = a quinol + NAD(+) + 4 H(+)(out). Its function is as follows. NDH-1 shuttles electrons from NADH, via FMN and iron-sulfur (Fe-S) centers, to quinones in the respiratory chain. The immediate electron acceptor for the enzyme in this species is believed to be ubiquinone. Couples the redox reaction to proton translocation (for every two electrons transferred, four hydrogen ions are translocated across the cytoplasmic membrane), and thus conserves the redox energy in a proton gradient. This subunit may bind ubiquinone. This Rhodopseudomonas palustris (strain ATCC BAA-98 / CGA009) protein is NADH-quinone oxidoreductase subunit H 1.